A 772-amino-acid polypeptide reads, in one-letter code: Metabotropic glutamate receptor-like protein G (772 aa).

Positions 1–23 (MKKIIFLVLFLIFIFKDIKSSYG) are cleaved as a signal peptide. Residues 24-391 (VDLVNFKMIT…TQVKFSPSIQ (368 aa)) are Extracellular-facing. N-linked (GlcNAc...) asparagine glycosylation is found at N73, N126, N262, N313, N343, and N378. The chain crosses the membrane as a helical span at residues 392-412 (IGVSIVSGVLIAIVLLSMVGV). Over 413–426 (YKYRASSSIRSASP) the chain is Cytoplasmic. A helical transmembrane segment spans residues 427–447 (IFLIFILFGALIVFGGIILWV). The Extracellular portion of the chain corresponds to 448-463 (SELNDHVCNGRLWMVT). Residues 464-484 (LGFSTLIGSLVVKNFRIWLIF) traverse the membrane as a helical segment. The Cytoplasmic segment spans residues 485–500 (DNPELKTVKITNYQLY). A helical transmembrane segment spans residues 501–521 (PWVACCLVINIILMSILTSLG). Residues 522–551 (DLREVDATGIDSLGKYEFLKICKMNNSGAS) lie on the Extracellular side of the membrane. Residue N546 is glycosylated (N-linked (GlcNAc...) asparagine). Residues 552–572 (VLYTILAYFGALLLTGVFVSW) form a helical membrane-spanning segment. Over 573–586 (KIRIVDIEEFNESR) the chain is Cytoplasmic. The helical transmembrane segment at 587–607 (AIAHTLYAISFCLFVIVPLMI) threads the bilayer. Residues 608–616 (SPLEKQSET) lie on the Extracellular side of the membrane. The helical transmembrane segment at 617–637 (IILSVAGLFITTAAVLIIFLP) threads the bilayer. Topologically, residues 638-772 (KFYRVYEYGE…QIEPDEKNQD (135 aa)) are cytoplasmic. The disordered stretch occupies residues 664 to 772 (TARAESHKSS…QIEPDEKNQD (109 aa)). Over residues 718-728 (FTEESVSEIDE) the composition is skewed to acidic residues. Over residues 740 to 753 (PEINQSEQQNSEIE) the composition is skewed to low complexity. Pro residues predominate over residues 754–763 (QPPPPPPPQQ).

The protein in the N-terminal section; belongs to the BMP lipoprotein family. This sequence in the C-terminal section; belongs to the G-protein coupled receptor 3 family. GABA-B receptor subfamily.

It is found in the membrane. This Dictyostelium discoideum (Social amoeba) protein is Metabotropic glutamate receptor-like protein G (grlG).